The following is a 175-amino-acid chain: Large ribosomal subunit protein uL10 (175 aa).

The protein belongs to the universal ribosomal protein uL10 family. As to quaternary structure, part of the ribosomal stalk of the 50S ribosomal subunit. The N-terminus interacts with L11 and the large rRNA to form the base of the stalk. The C-terminus forms an elongated spine to which L12 dimers bind in a sequential fashion forming a multimeric L10(L12)X complex.

Forms part of the ribosomal stalk, playing a central role in the interaction of the ribosome with GTP-bound translation factors. The polypeptide is Large ribosomal subunit protein uL10 (Prochlorococcus marinus (strain MIT 9211)).